The primary structure comprises 185 residues: Photosystem I assembly protein Ycf4 (185 aa).

The next 2 membrane-spanning stretches (helical) occupy residues 21 to 43 (NFFW…ASSY) and 63 to 85 (GVVM…CTIL).

It belongs to the Ycf4 family.

The protein resides in the plastid. It localises to the chloroplast thylakoid membrane. In terms of biological role, seems to be required for the assembly of the photosystem I complex. This is Photosystem I assembly protein Ycf4 from Saccharum hybrid (Sugarcane).